Consider the following 783-residue polypeptide: Isoamylase 1, chloroplastic (783 aa).

A chloroplast-targeting transit peptide spans 1-43; that stretch reads MDAIKCSSSFLHHTKLNTLFSNHTFPKISAPNFKPLFRPISIS. The active-site Nucleophile is the Asp-410. Glu-466 acts as the Proton donor in catalysis.

It belongs to the glycosyl hydrolase 13 family. As to quaternary structure, associates with ISA2 to form the heteromultimeric complex Iso1 required for amylopectin synthesis.

The protein resides in the plastid. It is found in the chloroplast. The enzyme catalyses Hydrolysis of (1-&gt;6)-alpha-D-glucosidic branch linkages in glycogen, amylopectin and their beta-limit dextrins.. Its pathway is glycan biosynthesis; starch biosynthesis. Involved in the trimming of pre-amylopectin chains. Accelerates the crystallization of nascent amylopectin molecules during starch synthesis. ISA1 and ISA2 work exclusively together as a multimeric holoenzyme. ISA1-ISA2 removes preferentially branches that are very close to other branches. Promotes negative gravitropic responses in shoots by facilitating starch granules (statoliths) formation in hypocotyls. The chain is Isoamylase 1, chloroplastic from Arabidopsis thaliana (Mouse-ear cress).